We begin with the raw amino-acid sequence, 81 residues long: ATP synthase subunit c (81 aa).

The next 2 helical transmembrane spans lie at 6–26 (AAAS…GPGI) and 57–77 (LAFM…LLFA).

It belongs to the ATPase C chain family. In terms of assembly, F-type ATPases have 2 components, F(1) - the catalytic core - and F(0) - the membrane proton channel. F(1) has five subunits: alpha(3), beta(3), gamma(1), delta(1), epsilon(1). F(0) has four main subunits: a(1), b(1), b'(1) and c(10-14). The alpha and beta chains form an alternating ring which encloses part of the gamma chain. F(1) is attached to F(0) by a central stalk formed by the gamma and epsilon chains, while a peripheral stalk is formed by the delta, b and b' chains.

It is found in the cellular thylakoid membrane. Its function is as follows. F(1)F(0) ATP synthase produces ATP from ADP in the presence of a proton or sodium gradient. F-type ATPases consist of two structural domains, F(1) containing the extramembraneous catalytic core and F(0) containing the membrane proton channel, linked together by a central stalk and a peripheral stalk. During catalysis, ATP synthesis in the catalytic domain of F(1) is coupled via a rotary mechanism of the central stalk subunits to proton translocation. Functionally, key component of the F(0) channel; it plays a direct role in translocation across the membrane. A homomeric c-ring of between 10-14 subunits forms the central stalk rotor element with the F(1) delta and epsilon subunits. In Picosynechococcus sp. (strain ATCC 27264 / PCC 7002 / PR-6) (Agmenellum quadruplicatum), this protein is ATP synthase subunit c.